The sequence spans 511 residues: Phosphoenolpyruvate carboxylase (511 aa).

Belongs to the PEPCase type 2 family. Homotetramer. Requires Mg(2+) as cofactor.

It carries out the reaction oxaloacetate + phosphate = phosphoenolpyruvate + hydrogencarbonate. Functionally, catalyzes the irreversible beta-carboxylation of phosphoenolpyruvate (PEP) to form oxaloacetate (OAA), a four-carbon dicarboxylic acid source for the tricarboxylic acid cycle. This Saccharolobus islandicus (strain M.16.27) (Sulfolobus islandicus) protein is Phosphoenolpyruvate carboxylase.